Reading from the N-terminus, the 284-residue chain is Ermin (284 aa).

The interval 1–23 (MTDVPATFTQAECNGDKPPENGQ) is disordered. The residue at position 73 (S73) is a Phosphoserine. The segment at 110–251 (REGHQWEKIP…PTLGKKSDIS (142 aa)) is disordered. Basic and acidic residues-rich tracts occupy residues 126–140 (EIRR…QPLK) and 171–183 (LHSK…KVWD). Residues 184–200 (EEIDDDDDDNCNNDEDE) are compositionally biased toward acidic residues. Positions 201–220 (VRVIEFKKKHEEVSQFKEEG) are enriched in basic and acidic residues. A phosphoserine mark is found at S214, S226, S230, and S233. Positions 225-235 (DSPLSSASSQA) are enriched in low complexity. T237 carries the post-translational modification Phosphothreonine. Residues 265–284 (KIRKGNTKQRIDEFESMMHL) are binds actin.

In terms of assembly, binds actin. In terms of tissue distribution, highly expressed in adult and fetal brain. Expressed at intermediate levels in the lung and liver.

It is found in the cytoplasm. The protein resides in the cytoskeleton. Functionally, plays a role in cytoskeletal rearrangements during the late wrapping and/or compaction phases of myelinogenesis as well as in maintenance and stability of myelin sheath in the adult. May play an important role in late-stage oligodendroglia maturation, myelin/Ranvier node formation during CNS development, and in the maintenance and plasticity of related structures in the mature CNS. This is Ermin (ERMN) from Homo sapiens (Human).